Consider the following 344-residue polypeptide: Dihydroorotate dehydrogenase (quinone) (344 aa).

Residues 65–69 (AGLDK) and Thr89 contribute to the FMN site. Residue Lys69 coordinates substrate. Substrate is bound at residue 114–118 (NRMGF). Residues Asn142 and Asn175 each contribute to the FMN site. Asn175 is a binding site for substrate. Ser178 (nucleophile) is an active-site residue. Asn180 lines the substrate pocket. Residues Lys220 and Thr248 each contribute to the FMN site. Position 249–250 (249–250 (NT)) interacts with substrate. Residues Gly271, Gly300, and 321 to 322 (YT) contribute to the FMN site.

The protein belongs to the dihydroorotate dehydrogenase family. Type 2 subfamily. Monomer. It depends on FMN as a cofactor.

Its subcellular location is the cell membrane. The catalysed reaction is (S)-dihydroorotate + a quinone = orotate + a quinol. It functions in the pathway pyrimidine metabolism; UMP biosynthesis via de novo pathway; orotate from (S)-dihydroorotate (quinone route): step 1/1. Functionally, catalyzes the conversion of dihydroorotate to orotate with quinone as electron acceptor. This chain is Dihydroorotate dehydrogenase (quinone), found in Paraburkholderia phymatum (strain DSM 17167 / CIP 108236 / LMG 21445 / STM815) (Burkholderia phymatum).